The sequence spans 156 residues: 6,7-dimethyl-8-ribityllumazine synthase (156 aa).

Residues phenylalanine 22, 56–58, and 80–82 contribute to the 5-amino-6-(D-ribitylamino)uracil site; these read AFE and AVV. 85–86 is a (2S)-2-hydroxy-3-oxobutyl phosphate binding site; the sequence is ET. The active-site Proton donor is histidine 88. Phenylalanine 113 contacts 5-amino-6-(D-ribitylamino)uracil. (2S)-2-hydroxy-3-oxobutyl phosphate is bound at residue arginine 127.

Belongs to the DMRL synthase family.

It catalyses the reaction (2S)-2-hydroxy-3-oxobutyl phosphate + 5-amino-6-(D-ribitylamino)uracil = 6,7-dimethyl-8-(1-D-ribityl)lumazine + phosphate + 2 H2O + H(+). The protein operates within cofactor biosynthesis; riboflavin biosynthesis; riboflavin from 2-hydroxy-3-oxobutyl phosphate and 5-amino-6-(D-ribitylamino)uracil: step 1/2. In terms of biological role, catalyzes the formation of 6,7-dimethyl-8-ribityllumazine by condensation of 5-amino-6-(D-ribitylamino)uracil with 3,4-dihydroxy-2-butanone 4-phosphate. This is the penultimate step in the biosynthesis of riboflavin. In Pediococcus pentosaceus (strain ATCC 25745 / CCUG 21536 / LMG 10740 / 183-1w), this protein is 6,7-dimethyl-8-ribityllumazine synthase.